The primary structure comprises 332 residues: Beta-ketoacyl-[acyl-carrier-protein] synthase III (332 aa).

Catalysis depends on residues Cys116 and His255. Residues 256-260 form an ACP-binding region; that stretch reads QANLR. Asn285 is an active-site residue.

Belongs to the thiolase-like superfamily. FabH family. As to quaternary structure, homodimer.

The protein localises to the cytoplasm. It catalyses the reaction malonyl-[ACP] + acetyl-CoA + H(+) = 3-oxobutanoyl-[ACP] + CO2 + CoA. The protein operates within lipid metabolism; fatty acid biosynthesis. Its function is as follows. Catalyzes the condensation reaction of fatty acid synthesis by the addition to an acyl acceptor of two carbons from malonyl-ACP. Catalyzes the first condensation reaction which initiates fatty acid synthesis and may therefore play a role in governing the total rate of fatty acid production. Possesses both acetoacetyl-ACP synthase and acetyl transacylase activities. Its substrate specificity determines the biosynthesis of branched-chain and/or straight-chain of fatty acids. The polypeptide is Beta-ketoacyl-[acyl-carrier-protein] synthase III (Helicobacter hepaticus (strain ATCC 51449 / 3B1)).